The following is an 860-amino-acid chain: Spindle and centriole-associated protein 1 (860 aa).

4 disordered regions span residues 127 to 150 (RKRT…GINQ), 172 to 201 (DDAG…HSNR), 230 to 250 (ATQS…AEDQ), and 294 to 332 (PLLA…TGSS). Polar residues-rich tracts occupy residues 139 to 150 (PDSSQSHTGINQ), 190 to 200 (ELPNSLSQHSN), and 230 to 245 (ATQS…SSEL). Thr-236 is modified (phosphothreonine). Phosphoserine is present on Ser-240. Over residues 317-329 (SSSTASADRPSST) the composition is skewed to low complexity. Residues 383–439 (RYLKESEIQLRKEVETRQQLEQMLGDHRELIDALTAEILSLREENSTMQARLQQYMV) are a coiled coil. The segment at 623–645 (PAFVSLSQPPCSSLPSTQQPRNP) is disordered. The span at 627–642 (SLSQPPCSSLPSTQQP) shows a compositional bias: low complexity. Phosphoserine is present on Ser-648. The interval 693-718 (ITSSGGEQGDGLREPRKQGSASEVST) is disordered. Residues 729 to 757 (SSMEERIAELNRQSMEARSKLLQLIEQQK) are a coiled coil. Phosphoserine occurs at positions 765, 766, 769, and 824. A disordered region spans residues 792–860 (GMEASESSKC…GWFALSAHIP (69 aa)). Residues 804–824 (VSPVSGNSSRRSSGAISNSCS) are compositionally biased toward low complexity.

In terms of assembly, interacts with CEP120.

It localises to the cytoplasm. The protein resides in the cytoskeleton. It is found in the microtubule organizing center. Its subcellular location is the centrosome. The protein localises to the centriole. It localises to the spindle. Its function is as follows. Regulator required for centriole duplication, for proper bipolar spindle formation and chromosome congression in mitosis. The protein is Spindle and centriole-associated protein 1 (Spice1) of Mus musculus (Mouse).